Reading from the N-terminus, the 450-residue chain is UDP-N-acetylmuramoylalanine--D-glutamate ligase (450 aa).

Residue 115 to 121 (GTNGKTT) coordinates ATP.

The protein belongs to the MurCDEF family.

Its subcellular location is the cytoplasm. It carries out the reaction UDP-N-acetyl-alpha-D-muramoyl-L-alanine + D-glutamate + ATP = UDP-N-acetyl-alpha-D-muramoyl-L-alanyl-D-glutamate + ADP + phosphate + H(+). It participates in cell wall biogenesis; peptidoglycan biosynthesis. Functionally, cell wall formation. Catalyzes the addition of glutamate to the nucleotide precursor UDP-N-acetylmuramoyl-L-alanine (UMA). The protein is UDP-N-acetylmuramoylalanine--D-glutamate ligase of Caldanaerobacter subterraneus subsp. tengcongensis (strain DSM 15242 / JCM 11007 / NBRC 100824 / MB4) (Thermoanaerobacter tengcongensis).